The sequence spans 211 residues: GTP pyrophosphokinase YjbM (211 aa).

Residues Lys21–Arg28, Glu41–Phe42, and Arg46–Lys48 each bind guanosine 3'-diphosphate 5'-triphosphate. ATP-binding positions include Arg46–Lys48, Ser52, Lys56–Arg59, Asp72, and Arg77. Arg59 contributes to the guanosine 3'-diphosphate 5'-triphosphate binding site. Residue Asp72 participates in Mg(2+) binding. Guanosine 3'-diphosphate 5'-triphosphate contacts are provided by residues Arg105, Lys112–Ser114, and His120. The active-site Proton acceptor is Glu139. Residues Asn148 and Ala151–His155 contribute to the guanosine 3'-diphosphate 5'-triphosphate site.

The protein belongs to the RelA/SpoT family. In terms of assembly, homotetramer.

It catalyses the reaction GTP + ATP = guanosine 3'-diphosphate 5'-triphosphate + AMP. The enzyme catalyses GDP + ATP = guanosine 3',5'-bis(diphosphate) + AMP. The protein operates within purine metabolism; ppGpp biosynthesis; ppGpp from GTP: step 1/2. Its activity is regulated as follows. Allosterically regulated by its own products; pppGpp simulates synthesis 10-fold more than ppGpp. 2 pppGpp molecules bind in a regulatory cleft in the middle of the tetramer in an asymmetric manner. There is a specific contact of Lys-25 to the gamma-phosphate of pppGpp, explaining why pppGpp stimulates activity but ppGpp does not. Its function is as follows. Functions as a (p)ppGpp synthase; GDP can be used instead of GTP, resulting in an increase of (p)ppGpp synthesis. The enzyme binds ATP, then GDP or GTP and catalysis is highly cooperative. In eubacteria ppGpp (guanosine 3'-diphosphate 5'-diphosphate) is a mediator of the stringent response that coordinates a variety of cellular activities in response to changes in nutritional abundance. Probably has a minor role in the stringent response. In Bacillus subtilis (strain 168), this protein is GTP pyrophosphokinase YjbM (yjbM).